A 602-amino-acid polypeptide reads, in one-letter code: 4-hydroxy-3-methylbut-2-en-1-yl diphosphate synthase (flavodoxin) (602 aa).

Cys508, Cys511, Cys543, and Glu550 together coordinate [4Fe-4S] cluster.

It belongs to the IspG family. It depends on [4Fe-4S] cluster as a cofactor.

The catalysed reaction is (2E)-4-hydroxy-3-methylbut-2-enyl diphosphate + oxidized [flavodoxin] + H2O + 2 H(+) = 2-C-methyl-D-erythritol 2,4-cyclic diphosphate + reduced [flavodoxin]. Its pathway is isoprenoid biosynthesis; isopentenyl diphosphate biosynthesis via DXP pathway; isopentenyl diphosphate from 1-deoxy-D-xylulose 5-phosphate: step 5/6. Converts 2C-methyl-D-erythritol 2,4-cyclodiphosphate (ME-2,4cPP) into 1-hydroxy-2-methyl-2-(E)-butenyl 4-diphosphate. In Chlamydia trachomatis serovar L2b (strain UCH-1/proctitis), this protein is 4-hydroxy-3-methylbut-2-en-1-yl diphosphate synthase (flavodoxin).